A 979-amino-acid chain; its full sequence is SGGFDFSFLPQPPQEKHDGGRYYLGPGPMGLMGPRGPPGASGAPGPQGFQGPAGEPGEPGQTGPAGARGPAGPPGKAGGVVGPQGARGFPGTPGLPGFKGIRGHNGLDGLKGQPGAPGVKGEPGAPGENGTPGQTGARGLPGERGRVGAPGPAGARGSDGSVGPVGPAGPIGSAGPPGFPGAPGPKGELGPVGSTGPSGPAGPRGEQGLPGVSGPVGPPGNPGANGLTGAKGAAGLPGVAGAPGLPGPRARGLVGEPGPAGSKGESGGEPGSAGPQGPPGSSGEEGKRGPSGESGSTGPTGPPGLRGGPGSRAGVIGPAGARGASGPAGVRGRPGEPGLMGARGLPGSPGNVGPAGKEGPVGLPGIDGRPGPIGPAGARGEAGNIGFPGPKGPAGDPGKAGEKGAGNRGAPGPDGNNGAQGPPGLQGVQGGKGEQGPAGPPGFQGLPGPAGTTGEAGKPGERGIPGEFGLPGPAGPRGERGPPGESGAVGPSGAIGSRGPSGPPGPDGNKGEPGVVGAPGGSGGLPGERGAAGIPGGKGEKGETGLRGEVGTTGRDGARGAPGAVGAPGPAGATGDRGEAGAAGPAGPAGPRGSPGERGEVGPAGPNGFAGPAGAAGQPGAKGERGTKGPKGENGIVGPTGPVGSAGPAGPNGPAGPAGSRGDGGPPGATGFPGAAGRTGPPGPSGITGPPGPPGAAGKEGLRGPRGDQGPVGRGETGAGGPPGFTGEKGPSGEPGTAGPPGTAGPQGLLGAPGILGLPGSRGERGLPGVAGAVGEPGPLGIGPPGARGGRDGNPGSDGPPGRDGLPGHKGYAGNGPVGAAGAPGPHGVGPAGKHGNRGEPGPVGSVGPVGALGPRGPSGPQGIRGDKGEPGDKGPRGLPGLKGHNGLQGLPGLAGHHGDQGAPGPVGPAGPRGPAGPSGPAGKDGRTGHPGAVGPAGIRGSQGSQGPSGPPGPPGPPGPPGASGGGYDFGYEGDFYRA.

A disordered region spans residues 1-979; the sequence is SGGFDFSFLP…FGYEGDFYRA (979 aa). 4-hydroxyproline occurs at positions 10, 13, 38, and 44. Residues 24–70 are compositionally biased toward low complexity; that stretch reads LGPGPMGLMGPRGPPGASGAPGPQGFQGPAGEPGEPGQTGPAGARGP. The residue at position 99 (Lys99) is a 5-hydroxylysine; alternate. A glycan (O-linked (Gal...) hydroxylysine; alternate) is linked at Lys99. Low complexity-rich tracts occupy residues 147 to 176, 222 to 263, 272 to 282, and 312 to 331; these read VGAP…SAGP, PGAN…AGSK, SAGPQGPPGSS, and RAGV…AGVR. 4-hydroxyproline is present on residues Pro334 and Pro337. Over residues 363 to 382 the composition is skewed to low complexity; it reads LPGIDGRPGPIGPAGARGEA. A compositionally biased stretch (gly residues) spans 427-436; the sequence is GVQGGKGEQG. Low complexity predominate over residues 483–500; it reads PGESGAVGPSGAIGSRGP. Positions 517–527 are enriched in gly residues; sequence GAPGGSGGLPG. Low complexity-rich tracts occupy residues 550 to 594 and 601 to 621; these read VGTT…PRGS and VGPA…QPGA. Residues 622–631 show a composition bias toward basic and acidic residues; it reads KGERGTKGPK. A compositionally biased stretch (low complexity) spans 639 to 649; it reads PTGPVGSAGPA. Residues 659–668 are compositionally biased toward gly residues; sequence GSRGDGGPPG. Positions 669–679 are enriched in low complexity; it reads ATGFPGAAGRT. A compositionally biased stretch (gly residues) spans 710–724; the sequence is GPVGRGETGAGGPPG. Low complexity-rich tracts occupy residues 725–759 and 767–777; these read FTGE…LGLP and LPGVAGAVGEP. A compositionally biased stretch (gly residues) spans 778-788; sequence GPLGIGPPGAR. The segment covering 840–855 has biased composition (low complexity); sequence EPGPVGSVGPVGALGP. Over residues 865 to 876 the composition is skewed to basic and acidic residues; it reads RGDKGEPGDKGP. The segment covering 949–961 has biased composition (pro residues); sequence SGPPGPPGPPGPP.

It belongs to the fibrillar collagen family. In terms of assembly, trimers of one alpha 2(I) and two alpha 1(I) chains. Interacts (via C-terminus) with TMEM131 (via PapD-L domain); the interaction is direct and is involved in assembly and TRAPPIII ER-to-Golgi transport complex-dependent secretion of collagen. In terms of processing, prolines at the third position of the tripeptide repeating unit (G-X-Y) are hydroxylated in some or all of the chains. As to expression, expressed in bones.

It is found in the secreted. The protein resides in the extracellular space. Its subcellular location is the extracellular matrix. In terms of biological role, type I collagen is a member of group I collagen (fibrillar forming collagen). The chain is Collagen alpha-2(I) chain from Bradypus variegatus (Brown-throated three-fingered sloth).